Here is a 341-residue protein sequence, read N- to C-terminus: Dehydration-responsive element-binding protein 2C (341 aa).

A Nuclear localization signal motif is present at residues 8-48 (RKRKSRGTRDVAEILRQWREYNEQIEAESCIDGGGPKSIRK). The tract at residues 36–63 (SCIDGGGPKSIRKPPPKGSRKGCMKGKG) is disordered. The span at 45–59 (SIRKPPPKGSRKGCM) shows a compositional bias: basic residues. The segment at residues 71–128 (DYRGVRQRRWGKWVAEIREPDGGARLWLGTFSSSYEAALAYDEAAKAIYGQSARLNLP) is a DNA-binding region (AP2/ERF).

Belongs to the AP2/ERF transcription factor family. ERF subfamily.

It localises to the nucleus. Functionally, transcriptional activator that binds specifically to the DNA sequence 5'-[AG]CCGAC-3'. Binding to the C-repeat/DRE element mediates high salinity- and abscisic acid-inducible transcription. This Arabidopsis thaliana (Mouse-ear cress) protein is Dehydration-responsive element-binding protein 2C (DREB2C).